Here is a 262-residue protein sequence, read N- to C-terminus: Glutamate 5-kinase (262 aa).

K14 is a binding site for ATP. Substrate-binding residues include S54, D141, and N153. Residues 173–174 and 214–220 each bind ATP; these read SD and TGGMVTK.

It belongs to the glutamate 5-kinase family.

Its subcellular location is the cytoplasm. The enzyme catalyses L-glutamate + ATP = L-glutamyl 5-phosphate + ADP. It participates in amino-acid biosynthesis; L-proline biosynthesis; L-glutamate 5-semialdehyde from L-glutamate: step 1/2. Functionally, catalyzes the transfer of a phosphate group to glutamate to form L-glutamate 5-phosphate. The sequence is that of Glutamate 5-kinase from Symbiobacterium thermophilum (strain DSM 24528 / JCM 14929 / IAM 14863 / T).